The sequence spans 256 residues: Type III pantothenate kinase (256 aa).

Residue Asp7–Val14 participates in ATP binding. Gly108–Cys111 provides a ligand contact to substrate. The Proton acceptor role is filled by Asp110. Asp130 lines the K(+) pocket. Thr133 is a binding site for ATP. Residue Thr185 coordinates substrate.

It belongs to the type III pantothenate kinase family. In terms of assembly, homodimer. NH4(+) is required as a cofactor. The cofactor is K(+).

Its subcellular location is the cytoplasm. The enzyme catalyses (R)-pantothenate + ATP = (R)-4'-phosphopantothenate + ADP + H(+). Its pathway is cofactor biosynthesis; coenzyme A biosynthesis; CoA from (R)-pantothenate: step 1/5. In terms of biological role, catalyzes the phosphorylation of pantothenate (Pan), the first step in CoA biosynthesis. The protein is Type III pantothenate kinase of Bifidobacterium adolescentis (strain ATCC 15703 / DSM 20083 / NCTC 11814 / E194a).